A 461-amino-acid chain; its full sequence is MGKEKIHINIVVIGHVDSGKSTSTGHLIYKCGGIDKRTIEKFEKEAAEMGKGSFKYAWVLDKLKAERERGITIDIALWKFETSKYYVTIIDAPGHRDFIKNMITGTSQADCAVLIVAAGVGEFEAGISKNGQTREHALLAFTLGVKQLIVGVNKMDSTEPPYSQARFEEIQKEVSTYIKKIGYNPAAVAFVPISGWHGDNMLEASDKMSWFKGWKIERKDGNASGTTLLEALDAILPPSRPTDKPLRLPLQDVYKIGGIGTVPVGRVETGVLKPGMVVTFAPPNLTTEVKSVEMHHESLPEAVPGDNVGFNIKNVSVKEIRRGYVAGDSKNDPPKAAASFNAQVIILNHPGQINQGYAPVLDCHTAHIACKFNELIEKIDRRSGKKLEDNPKFVKSGDAAIVKLIPQKPMVVEPFSNYPPLGRFAVRDMRQTVAVGVIKAVDTKEISGKTTKAAEKAQKKK.

Position 2 is a n,N,N-trimethylglycine (G2). A tr-type G domain is found at 5-242 (KIHINIVVIG…DAILPPSRPT (238 aa)). The segment at 14–21 (GHVDSGKS) is G1. Position 14-21 (14-21 (GHVDSGKS)) interacts with GTP. The interval 70 to 74 (GITID) is G2. The G3 stretch occupies residues 91–94 (DAPG). GTP contacts are provided by residues 153 to 156 (NKMD) and 194 to 196 (SGW). The tract at residues 153 to 156 (NKMD) is G4. The interval 194–196 (SGW) is G5. 2 positions are modified to 5-glutamyl glycerylphosphorylethanolamine: E301 and E374.

It belongs to the TRAFAC class translation factor GTPase superfamily. Classic translation factor GTPase family. EF-Tu/EF-1A subfamily.

It is found in the cytoplasm. The catalysed reaction is GTP + H2O = GDP + phosphate + H(+). In terms of biological role, translation elongation factor that catalyzes the GTP-dependent binding of aminoacyl-tRNA (aa-tRNA) to the A-site of ribosomes during the elongation phase of protein synthesis. Base pairing between the mRNA codon and the aa-tRNA anticodon promotes GTP hydrolysis, releasing the aa-tRNA from EEF1A1 and allowing its accommodation into the ribosome. The growing protein chain is subsequently transferred from the P-site peptidyl tRNA to the A-site aa-tRNA, extending it by one amino acid through ribosome-catalyzed peptide bond formation. The chain is Elongation factor 1-alpha (eef1a) from Oryzias latipes (Japanese rice fish).